Here is a 198-residue protein sequence, read N- to C-terminus: MSLSIDVTSLPSFSSSIYKNESSATASTLSGKSIGRSVQYVSPDAEAFSKYMLSKSPEDIGPSDSASNDPLTSFSIRSNAVKTNADAGVSMDSSVQSRPSINVGCDQVDFSFNKGIKVNANLDSSISVSTNSRKEKSKGDRKSRKHYPKIEAESDSDEYVLDDSDSDDGKCRNCKYKRKYFALRMRMKQVAMQLIEDL.

Residue Ser-67 is modified to Phosphoserine; by host CK1. Asp-92 lines the Mg(2+) pocket. A disordered region spans residues 127–167; the sequence is SVSTNSRKEKSKGDRKSRKHYPKIEAESDSDEYVLDDSDSD. The span at 153–166 shows a compositional bias: acidic residues; that stretch reads ESDSDEYVLDDSDS. Phosphoserine; by host is present on residues Ser-154, Ser-156, Ser-164, and Ser-166.

This sequence belongs to the rotavirus NSP5 family. Homodimer. Interacts with VP1. Interacts with VP2. Interacts with NSP2; this interaction leads to up-regulation of NSP5 hyperphosphorylation and formation of virus factories. Interacts with NSP6. Participates in the selective exclusion of host proteins from stress granules (SG) and P bodies (PB). Also participates in the sequestration of these remodeled organelles in viral factories. Mg(2+) serves as cofactor. O-glycosylated. In terms of processing, hyperphosphorylated on serine residues, when in dimeric form. Phosphorylation by host CK1 is required for the hyperphosphorylation of NSP5 dimer.

The protein resides in the host cytoplasm. Functionally, plays an essential role in the viral genome replication. Participates, together with NSP2, in the formation of viral factories (viroplasms), which are large inclusions in the host cytoplasm where replication intermediates are assembled and viral RNA replication takes place. Orchestrates the recruitment of viroplasmic proteins such as capsid proteins to these factories. Participates in the selective exclusion of host proteins from stress granules (SG) and P bodies (PB). Also participates in the sequestration of these remodeled organelles in viral factories. This is Non-structural protein 5 from Bos taurus (Bovine).